A 62-amino-acid polypeptide reads, in one-letter code: Overexpressed in colon carcinoma 1 protein homolog (62 aa).

Residues 1–16 (MGCGNSTAGGAGGRGA) show a composition bias toward gly residues. The tract at residues 1-62 (MGCGNSTAGG…SGQTKAAPKD (62 aa)) is disordered.

This sequence belongs to the OCC1 family.

The protein is Overexpressed in colon carcinoma 1 protein homolog of Gallus gallus (Chicken).